Reading from the N-terminus, the 356-residue chain is Protein-glutamate methylesterase/protein-glutamine glutaminase 3 (356 aa).

The 118-residue stretch at 3–120 folds into the Response regulatory domain; it reads KVAIVDDSAV…KGFLEESQAR (118 aa). At D54 the chain carries 4-aspartylphosphate. A CheB-type methylesterase domain is found at 165-356; that stretch reads NQTTDRVVAL…AEEIIAFTKQ (192 aa). Residues S177, H203, and D299 contribute to the active site.

It belongs to the CheB family. Phosphorylated by CheA. Phosphorylation of the N-terminal regulatory domain activates the methylesterase activity.

It is found in the cytoplasm. The catalysed reaction is [protein]-L-glutamate 5-O-methyl ester + H2O = L-glutamyl-[protein] + methanol + H(+). It carries out the reaction L-glutaminyl-[protein] + H2O = L-glutamyl-[protein] + NH4(+). Functionally, involved in chemotaxis. Part of a chemotaxis signal transduction system that modulates chemotaxis in response to various stimuli. Catalyzes the demethylation of specific methylglutamate residues introduced into the chemoreceptors (methyl-accepting chemotaxis proteins or MCP) by CheR. Also mediates the irreversible deamidation of specific glutamine residues to glutamic acid. The polypeptide is Protein-glutamate methylesterase/protein-glutamine glutaminase 3 (Shewanella oneidensis (strain ATCC 700550 / JCM 31522 / CIP 106686 / LMG 19005 / NCIMB 14063 / MR-1)).